We begin with the raw amino-acid sequence, 373 residues long: NADPH-dependent 3-keto-steroid reductase Hsd3b5 (373 aa).

Residues 10–15 (GAGGFL), Tyr-155, and Lys-159 each bind NADP(+). The Proton donor role is filled by Lys-159. A helical membrane pass occupies residues 288 to 308 (LSLLYWLAFLLETVSFLLRPV). Lys-350 carries the post-translational modification N6-acetyllysine.

It belongs to the 3-beta-HSD family. As to expression, expressed in the male liver, starting in late puberty.

Its subcellular location is the endoplasmic reticulum membrane. The protein localises to the mitochondrion membrane. The enzyme catalyses a 3beta-hydroxysteroid + NADP(+) = a 3-oxosteroid + NADPH + H(+). The catalysed reaction is 5alpha-androstane-3beta,17beta-diol + NADP(+) = 17beta-hydroxy-5alpha-androstan-3-one + NADPH + H(+). It participates in steroid metabolism. Functionally, responsible for the reduction of the oxo group on the C-3 of 5alpha-androstane steroids. Catalyzes the conversion of dihydrotestosterone to its inactive form 5alpha-androstanediol, that does not bind androgen receptor/AR. Does not function as an isomerase. The polypeptide is NADPH-dependent 3-keto-steroid reductase Hsd3b5 (Mus musculus (Mouse)).